The sequence spans 330 residues: Ribosomal RNA small subunit methyltransferase H (330 aa).

S-adenosyl-L-methionine contacts are provided by residues 50–52, Asp69, Leu103, Asp117, and Gln124; that span reads GGH.

It belongs to the methyltransferase superfamily. RsmH family.

The protein resides in the cytoplasm. It catalyses the reaction cytidine(1402) in 16S rRNA + S-adenosyl-L-methionine = N(4)-methylcytidine(1402) in 16S rRNA + S-adenosyl-L-homocysteine + H(+). In terms of biological role, specifically methylates the N4 position of cytidine in position 1402 (C1402) of 16S rRNA. This Saccharopolyspora erythraea (strain ATCC 11635 / DSM 40517 / JCM 4748 / NBRC 13426 / NCIMB 8594 / NRRL 2338) protein is Ribosomal RNA small subunit methyltransferase H.